A 149-amino-acid polypeptide reads, in one-letter code: Large ribosomal subunit protein uL15 (149 aa).

Positions 1-28 (MVIKIHDLRPAPGSKRDKIRVGRGEGSK) are enriched in basic and acidic residues. Positions 1–54 (MVIKIHDLRPAPGSKRDKIRVGRGEGSKGKTAGRGTKGTKARKNVSPRFEGGQM) are disordered.

The protein belongs to the universal ribosomal protein uL15 family. In terms of assembly, part of the 50S ribosomal subunit.

Its function is as follows. Binds to the 23S rRNA. This Saccharopolyspora erythraea (strain ATCC 11635 / DSM 40517 / JCM 4748 / NBRC 13426 / NCIMB 8594 / NRRL 2338) protein is Large ribosomal subunit protein uL15.